The chain runs to 726 residues: Penicillin-binding protein 1A (726 aa).

The Cytoplasmic portion of the chain corresponds to 1–3 (MKK). Residues 4–24 (LVIGILGIVIALFVGLLVFLI) traverse the membrane as a helical; Signal-anchor for type II membrane protein segment. Topologically, residues 25 to 726 (PIYKNLPDPK…SDLNAILGLR (702 aa)) are periplasmic. The segment at 45–213 (SEVYDAKGRL…AKYNPFYHPE (169 aa)) is transglycosylase. The Proton donor; for transglycosylase activity role is filled by E83. The transpeptidase stretch occupies residues 379–662 (KYLGGNRAEI…SRVALPIWID (284 aa)). The active-site Acyl-ester intermediate; for transpeptidase activity is the S432.

It in the N-terminal section; belongs to the glycosyltransferase 51 family. This sequence in the C-terminal section; belongs to the transpeptidase family.

Its subcellular location is the cell inner membrane. It catalyses the reaction [GlcNAc-(1-&gt;4)-Mur2Ac(oyl-L-Ala-gamma-D-Glu-L-Lys-D-Ala-D-Ala)](n)-di-trans,octa-cis-undecaprenyl diphosphate + beta-D-GlcNAc-(1-&gt;4)-Mur2Ac(oyl-L-Ala-gamma-D-Glu-L-Lys-D-Ala-D-Ala)-di-trans,octa-cis-undecaprenyl diphosphate = [GlcNAc-(1-&gt;4)-Mur2Ac(oyl-L-Ala-gamma-D-Glu-L-Lys-D-Ala-D-Ala)](n+1)-di-trans,octa-cis-undecaprenyl diphosphate + di-trans,octa-cis-undecaprenyl diphosphate + H(+). The catalysed reaction is Preferential cleavage: (Ac)2-L-Lys-D-Ala-|-D-Ala. Also transpeptidation of peptidyl-alanyl moieties that are N-acyl substituents of D-alanine.. The protein operates within cell wall biogenesis; peptidoglycan biosynthesis. This Aquifex aeolicus (strain VF5) protein is Penicillin-binding protein 1A (mrcA).